Consider the following 95-residue polypeptide: Aspartyl/glutamyl-tRNA(Asn/Gln) amidotransferase subunit C (95 aa).

This sequence belongs to the GatC family. As to quaternary structure, heterotrimer of A, B and C subunits.

The enzyme catalyses L-glutamyl-tRNA(Gln) + L-glutamine + ATP + H2O = L-glutaminyl-tRNA(Gln) + L-glutamate + ADP + phosphate + H(+). The catalysed reaction is L-aspartyl-tRNA(Asn) + L-glutamine + ATP + H2O = L-asparaginyl-tRNA(Asn) + L-glutamate + ADP + phosphate + 2 H(+). In terms of biological role, allows the formation of correctly charged Asn-tRNA(Asn) or Gln-tRNA(Gln) through the transamidation of misacylated Asp-tRNA(Asn) or Glu-tRNA(Gln) in organisms which lack either or both of asparaginyl-tRNA or glutaminyl-tRNA synthetases. The reaction takes place in the presence of glutamine and ATP through an activated phospho-Asp-tRNA(Asn) or phospho-Glu-tRNA(Gln). The sequence is that of Aspartyl/glutamyl-tRNA(Asn/Gln) amidotransferase subunit C from Pseudomonas fluorescens (strain SBW25).